Here is an 81-residue protein sequence, read N- to C-terminus: Short neurotoxin 1 (81 aa).

The N-terminal stretch at 1–21 (MKTLLLTLVVVTIVCLDLGYT) is a signal peptide. 4 disulfide bridges follow: Cys24/Cys43, Cys38/Cys60, Cys62/Cys73, and Cys74/Cys79.

The protein belongs to the three-finger toxin family. Short-chain subfamily. Type I alpha-neurotoxin sub-subfamily. In terms of tissue distribution, expressed by the venom gland.

Its subcellular location is the secreted. Functionally, binds to muscle nicotinic acetylcholine receptor (nAChR) and inhibit acetylcholine from binding to the receptor, thereby impairing neuromuscular transmission. The chain is Short neurotoxin 1 from Cryptophis nigrescens (Eastern small-eyed snake).